A 1261-amino-acid chain; its full sequence is Rho GTPase-activating protein 29 (1261 aa).

A phosphoserine mark is found at Ser171, Ser176, Ser179, and Ser190. The F-BAR domain occupies 192–462; it reads LELDNVLLKN…SAKLYDPGQE (271 aa). A coiled-coil region spans residues 296–418; that stretch reads RKNEMEKQRK…EILAQLRTLV (123 aa). Residues 481-501 form a disordered region; that stretch reads NVNKHLNSSQPSGFGPANSLE. Residues Ser499, Ser519, and Ser552 each carry the phosphoserine modification. The segment covering 541-559 has biased composition (low complexity); sequence SESTGGSSESRSLDSESIS. Residues 541-600 form a disordered region; it reads SESTGGSSESRSLDSESISPGDFHRKLPRTPSSGTMSSADDLDEREPPSPSETGPNSLGT. The Phorbol-ester/DAG-type zinc finger occupies 612–657; the sequence is THKFRKLRSPTKCRDCEGIVVFQGVECEECLLVCHRKCLENLVIIC. The Rho-GAP domain occupies 671 to 886; it reads AEFTQVAKKE…FLITYSQKIF (216 aa). Phosphoserine is present on residues Ser913 and Ser949. The tract at residues 981–1011 is disordered; sequence SASQKIEDGKTPKPLSLKSDRSTNNVERHTP. Residues 998–1010 show a composition bias toward basic and acidic residues; sequence KSDRSTNNVERHT. Residues Ser1019, Ser1144, and Ser1146 each carry the phosphoserine modification. Disordered regions lie at residues 1117–1153 and 1178–1238; these read HSIN…APVR and GNEE…VNPM. A compositionally biased stretch (basic and acidic residues) spans 1133–1144; sequence RSVREASERRSS. The tract at residues 1258–1261 is interaction with PTPN13/PTPL1; it reads PQFV.

As to quaternary structure, interacts with PTPN13/PTPL1. Interacts with RAP2A via its coiled coil domain. Interacts with RASIP1. In terms of tissue distribution, widely expressed. Highly expressed in skeletal muscle and heart. Expressed at intermediate level in placenta, liver and pancreas. Weakly expressed in brain, lung and kidney.

Functionally, GTPase activator for the Rho-type GTPases by converting them to an inactive GDP-bound state. Has strong activity toward RHOA, and weaker activity toward RAC1 and CDC42. May act as a specific effector of RAP2A to regulate Rho. In concert with RASIP1, suppresses RhoA signaling and dampens ROCK and MYH9 activities in endothelial cells and plays an essential role in blood vessel tubulogenesis. The chain is Rho GTPase-activating protein 29 (ARHGAP29) from Homo sapiens (Human).